The primary structure comprises 1845 residues: Proteasome adapter and scaffold protein ECM29 (1845 aa).

Residue alanine 2 is modified to N-acetylalanine. 27 HEAT repeats span residues 28–65 (TDEQ…LVHL), 107–144 (YPRL…LIPT), 162–205 (NLAE…QGSS), 326–362 (RDPV…YDGL), 387–426 (PEIK…VGKL), 429–466 (RMPH…LSMM), 469–507 (AYST…ASTV), 683–720 (YPEK…YSVV), 721–759 (VSTV…LGFT), 783–820 (TLPD…LGEI), 829–868 (PSEG…LGYF), 870–907 (VGDG…ITSA), 931–969 (AGAK…LLSL), 975–1012 (THKE…LGLV), 1013–1050 (YELG…VVFQ), 1112–1149 (AGEQ…WNAL), 1152–1189 (DKSM…LNDL), 1194–1231 (PLDD…LKTL), 1243–1281 (KGAA…LVKI), 1285–1323 (AGAM…TEQE), 1348–1386 (LQYL…IVSL), 1390–1427 (CPQD…MGHL), 1517–1554 (SFGG…MASI), 1558–1595 (TSSL…IACV), 1605–1642 (KSVP…AADI), 1646–1683 (TKED…ENEK), and 1779–1822 (TYSS…LATM). Residues 193 to 207 (QSRQNSSSAQGSSSN) show a composition bias toward low complexity. A disordered region spans residues 193–217 (QSRQNSSSAQGSSSNSGGGSGIPQP). Residue serine 830 is modified to Phosphoserine. Threonine 836 carries the post-translational modification Phosphothreonine. Residue lysine 1039 forms a Glycyl lysine isopeptide (Lys-Gly) (interchain with G-Cter in SUMO1) linkage.

This sequence belongs to the ECM29 family. In terms of assembly, non-stoichiometric component of the proteasome; associates with the 26S proteasome. Interacts (via N-terminus) with VPS11, VPS26A, VPS36, RAB11FIP4 and RABEP1. Interacts (via C-terminus) with DCTN1, DCTN2, KIF5B, MYH7, MYH10, MYO10 and ARF6.

The protein localises to the endoplasmic reticulum. It is found in the endoplasmic reticulum-Golgi intermediate compartment. Its subcellular location is the endosome. It localises to the cytoplasm. The protein resides in the cytoskeleton. The protein localises to the microtubule organizing center. It is found in the centrosome. Its subcellular location is the nucleus. It localises to the multivesicular body. The protein resides in the cytoplasmic vesicle. Adapter/scaffolding protein that binds to the 26S proteasome, motor proteins and other compartment specific proteins. May couple the proteasome to different compartments including endosome, endoplasmic reticulum and centrosome. May play a role in ERAD and other enhanced proteolysis. Promotes proteasome dissociation under oxidative stress. This is Proteasome adapter and scaffold protein ECM29 from Homo sapiens (Human).